The following is a 116-amino-acid chain: uncharacterized protein (116 aa).

Disordered stretches follow at residues M1–N26 and E74–I116. Positions S14–N26 are enriched in low complexity. The segment covering E74–E86 has biased composition (basic and acidic residues). Over residues N104–I116 the composition is skewed to polar residues.

This is an uncharacterized protein from Saccharomyces cerevisiae (strain ATCC 204508 / S288c) (Baker's yeast).